The primary structure comprises 171 residues: 3-hydroxydecanoyl-[acyl-carrier-protein] dehydratase (171 aa).

His70 is a catalytic residue.

This sequence belongs to the thioester dehydratase family. FabA subfamily. Homodimer.

It is found in the cytoplasm. The enzyme catalyses a (3R)-hydroxyacyl-[ACP] = a (2E)-enoyl-[ACP] + H2O. It catalyses the reaction (3R)-hydroxydecanoyl-[ACP] = (2E)-decenoyl-[ACP] + H2O. The catalysed reaction is (2E)-decenoyl-[ACP] = (3Z)-decenoyl-[ACP]. It participates in lipid metabolism; fatty acid biosynthesis. In terms of biological role, necessary for the introduction of cis unsaturation into fatty acids. Catalyzes the dehydration of (3R)-3-hydroxydecanoyl-ACP to E-(2)-decenoyl-ACP and then its isomerization to Z-(3)-decenoyl-ACP. Can catalyze the dehydratase reaction for beta-hydroxyacyl-ACPs with saturated chain lengths up to 16:0, being most active on intermediate chain length. The chain is 3-hydroxydecanoyl-[acyl-carrier-protein] dehydratase from Shewanella oneidensis (strain ATCC 700550 / JCM 31522 / CIP 106686 / LMG 19005 / NCIMB 14063 / MR-1).